The following is a 758-amino-acid chain: Vitamin K-dependent gamma-carboxylase (758 aa).

Positions 1-31 (MAVSARSARSPPDSDKVQKDKAGQTSGRRQG) are disordered. Residue Ala2 is modified to N-acetylalanine. Residues 2-60 (AVSARSARSPPDSDKVQKDKAGQTSGRRQGSRMGKLLGFEWTDVSSWGKLVTLLNRPTD) lie on the Cytoplasmic side of the membrane. The segment covering 12 to 22 (PDSDKVQKDKA) has biased composition (basic and acidic residues). The chain crosses the membrane as a helical span at residues 61 to 81 (PASLAVFRFLFGLMMVLDIPQ). At 82-113 (ERGLSSLDRRYLDGLEVCRFPLLDALQPLPLD) the chain is on the lumenal side. Cys99 and Cys450 are joined by a disulfide. Residues 114-134 (WMYLVYTIMFLGALGMMLGLR) form a helical membrane-spanning segment. Residues 135–136 (YR) are Cytoplasmic-facing. The chain crosses the membrane as a helical span at residues 137–157 (ISCVLFLLPYWYVFLLDKTSW). The Lumenal segment spans residues 158 to 292 (NNHSYLYGLL…VSYFHCMNSQ (135 aa)). A helical membrane pass occupies residues 293-313 (LFSIGMFPYVMLASSPLFCSP). Over 314–361 (EWPRKLVAHCPKRLQELLPLRTAPQPSASCVYKRSRAKGGQKPGLRHR) the chain is Cytoplasmic. Residues 362–382 (LGAAFTLLYLLEQLFLPYSHF) form a helical membrane-spanning segment. At 383 to 758 (LTQGYNNWTN…PNADAVHSEF (376 aa)) the chain is on the lumenal side. A disordered region spans residues 727-758 (PFEPVGEPSPSNTDSSNPNPSEPNADAVHSEF). Residues 734–750 (PSPSNTDSSNPNPSEPN) show a composition bias toward low complexity.

It belongs to the vitamin K-dependent gamma-carboxylase family. Monomer. May interact with CALU.

The protein resides in the endoplasmic reticulum membrane. It catalyses the reaction 4-carboxy-L-glutamyl-[protein] + 2,3-epoxyphylloquinone + H2O + H(+) = phylloquinol + L-glutamyl-[protein] + CO2 + O2. In terms of biological role, mediates the vitamin K-dependent carboxylation of glutamate residues to calcium-binding gamma-carboxyglutamate (Gla) residues with the concomitant conversion of the reduced hydroquinone form of vitamin K to vitamin K epoxide. Catalyzes gamma-carboxylation of various proteins, such as blood coagulation factors (F2, F7, F9 and F10), osteocalcin (BGLAP) or matrix Gla protein (MGP). In Delphinapterus leucas (Beluga whale), this protein is Vitamin K-dependent gamma-carboxylase (GGCX).